The following is a 727-amino-acid chain: Glycerol-3-phosphate dehydrogenase, mitochondrial (727 aa).

The N-terminal 42 residues, 1–42 (MAFQKAVKGTILVGGGALATVLGLSQFAHYRRKQMNLAYVKA), are a transit peptide targeting the mitochondrion. 71–99 (DILVIGGGATGSGCALDAVTRGLKTALVE) contributes to the FAD binding site. Phosphotyrosine is present on Y601. 2 consecutive EF-hand domains span residues 623–658 (SDID…INVQ) and 659–694 (MDEN…IQKG). Ca(2+)-binding residues include D672, N674, N676, Q678, and E683.

It belongs to the FAD-dependent glycerol-3-phosphate dehydrogenase family. FAD serves as cofactor.

The protein localises to the mitochondrion. It carries out the reaction a quinone + sn-glycerol 3-phosphate = dihydroxyacetone phosphate + a quinol. The protein operates within polyol metabolism; glycerol degradation via glycerol kinase pathway; glycerone phosphate from sn-glycerol 3-phosphate (aerobic route): step 1/1. Its activity is regulated as follows. Calcium-binding enhance the activity of the enzyme. Functionally, calcium-responsive mitochondrial glycerol-3-phosphate dehydrogenase which seems to be a key component of the pancreatic beta-cell glucose-sensing device. The polypeptide is Glycerol-3-phosphate dehydrogenase, mitochondrial (GPD2) (Macaca fascicularis (Crab-eating macaque)).